We begin with the raw amino-acid sequence, 217 residues long: Probable coenzyme A transferase subunit beta (217 aa).

Glutamate 50 is an active-site residue.

The protein belongs to the 3-oxoacid CoA-transferase subunit B family. Heterodimer of a subunit alpha and a subunit beta.

The sequence is that of Probable coenzyme A transferase subunit beta (yodR) from Bacillus subtilis (strain 168).